Here is a 128-residue protein sequence, read N- to C-terminus: Fluoride-specific ion channel FluC (128 aa).

Helical transmembrane passes span 3–23 (FSVI…RFLI), 34–54 (LFPV…GFLY), 69–89 (FITG…ETLL), and 100–120 (FLNI…AIIL). The Na(+) site is built by Gly-75 and Thr-78.

This sequence belongs to the fluoride channel Fluc/FEX (TC 1.A.43) family.

It localises to the cell inner membrane. It carries out the reaction fluoride(in) = fluoride(out). With respect to regulation, na(+) is not transported, but it plays an essential structural role and its presence is essential for fluoride channel function. Functionally, fluoride-specific ion channel. Important for reducing fluoride concentration in the cell, thus reducing its toxicity. The protein is Fluoride-specific ion channel FluC of Nitratiruptor sp. (strain SB155-2).